The following is a 341-amino-acid chain: uncharacterized protein (341 aa).

This sequence belongs to the Gfo/Idh/MocA family.

This is an uncharacterized protein from Bacillus subtilis (strain 168).